The primary structure comprises 349 residues: tRNA N6-adenosine threonylcarbamoyltransferase (349 aa).

Fe cation-binding residues include histidine 116 and histidine 120. Residues 139-143, aspartate 172, glycine 185, and asparagine 283 contribute to the substrate site; that span reads LVSGG. Aspartate 311 provides a ligand contact to Fe cation.

The protein belongs to the KAE1 / TsaD family. It depends on Fe(2+) as a cofactor.

Its subcellular location is the cytoplasm. It carries out the reaction L-threonylcarbamoyladenylate + adenosine(37) in tRNA = N(6)-L-threonylcarbamoyladenosine(37) in tRNA + AMP + H(+). Required for the formation of a threonylcarbamoyl group on adenosine at position 37 (t(6)A37) in tRNAs that read codons beginning with adenine. Is involved in the transfer of the threonylcarbamoyl moiety of threonylcarbamoyl-AMP (TC-AMP) to the N6 group of A37, together with TsaE and TsaB. TsaD likely plays a direct catalytic role in this reaction. This Colwellia psychrerythraea (strain 34H / ATCC BAA-681) (Vibrio psychroerythus) protein is tRNA N6-adenosine threonylcarbamoyltransferase.